Reading from the N-terminus, the 205-residue chain is Probable thymidylate kinase (205 aa).

7 to 14 (GIDGAGKS) contributes to the ATP binding site.

It belongs to the thymidylate kinase family.

It carries out the reaction dTMP + ATP = dTDP + ADP. The chain is Probable thymidylate kinase from Thermococcus kodakarensis (strain ATCC BAA-918 / JCM 12380 / KOD1) (Pyrococcus kodakaraensis (strain KOD1)).